Consider the following 341-residue polypeptide: MTDPFTSDGAKMPPKPFTVEEGRRQVRSFVLRQGRFTPAQQRAFDDLWPRFGLDYTGAPRDLAATFGRDAHKVLEIGFGNGAALRFAAQQDPSRDYIGIEVHAPGVGRLLNALDEDGSTHVRLYHHDAVEVLEHEIADGALDEVRIYFPDPWHKKRHNKRRLIQPAFAQLLVRKLREGGRLHAATDWADYAEQMWDVLDATPGLVNRAGPRGHVERPAWRPQTHFETRGQKLGHGVWDLLYDRDSGIGNRKGNCPRRPDNPQRPQFSLCQFPIPDSPFPAPNGHRADADQRYEARPRAGRFHDGDVPVRAHSRRRGGIDRAGGLGRHRTGGAGRIVRRFLR.

Positions 75, 100, 127, and 150 each coordinate S-adenosyl-L-methionine. The active site involves Asp150. A substrate-binding site is contributed by Lys154. Residues 156–161 form an interaction with RNA region; sequence RHNKRR. Asp186 is a substrate binding site.

It belongs to the class I-like SAM-binding methyltransferase superfamily. TrmB family.

The enzyme catalyses guanosine(46) in tRNA + S-adenosyl-L-methionine = N(7)-methylguanosine(46) in tRNA + S-adenosyl-L-homocysteine. Its pathway is tRNA modification; N(7)-methylguanine-tRNA biosynthesis. Catalyzes the formation of N(7)-methylguanine at position 46 (m7G46) in tRNA. In Xanthomonas euvesicatoria pv. vesicatoria (strain 85-10) (Xanthomonas campestris pv. vesicatoria), this protein is tRNA (guanine-N(7)-)-methyltransferase.